Consider the following 1331-residue polypeptide: Beta-mannanase/endoglucanase A (1331 aa).

Residues 1-41 (MRLKTKIRKKWLSVLCTVVFLLNILFIANVTILPKVGAATS) form the signal peptide. The catalytic (mannanase) stretch occupies residues 42–325 (NDGVVKIDTS…YKTNAIGTSS (284 aa)). The active-site Proton donor is the glutamate 162. Glutamate 257 serves as the catalytic Nucleophile. Disordered stretches follow at residues 319–363 (NAIG…TPAT), 515–566 (PSGA…TPAT), and 717–780 (EPSG…PLPT). The span at 323–335 (TSSTPTPTSTVTP) shows a compositional bias: low complexity. The 154-residue stretch at 363-516 (TSGQIKVLYA…GVLVWGQEPS (154 aa)) folds into the CBM3 1 domain. Pro residues-rich tracts occupy residues 521–541 (APAP…PTVT) and 551–561 (TPTPTPTPTPV). The CBM3 2 domain occupies 566 to 719 (TGGQIKVLYA…GVLVWGQEPS (154 aa)). A compositionally biased stretch (low complexity) spans 721–735 (TTPSPTSTPTVTVTP). Composition is skewed to pro residues over residues 736 to 756 (TPTP…PTVT) and 766 to 780 (TPTP…PLPT). The segment at 781–1331 (ISPSPSVVEI…RNLVFMRALV (551 aa)) is catalytic (endoglucanase).

The protein in the N-terminal section; belongs to the glycosyl hydrolase 5 (cellulase A) family. This sequence in the C-terminal section; belongs to the glycosyl hydrolase 44 (cellulase J) family.

It carries out the reaction Random hydrolysis of (1-&gt;4)-beta-D-mannosidic linkages in mannans, galactomannans and glucomannans.. It catalyses the reaction Endohydrolysis of (1-&gt;4)-beta-D-glucosidic linkages in cellulose, lichenin and cereal beta-D-glucans.. Degradation of hemicelluloses, the second most abundant polysaccharides in nature. Contains two catalytic domains with mannanase and endoglucanase activities. The sequence is that of Beta-mannanase/endoglucanase A (manA) from Caldicellulosiruptor saccharolyticus (Caldocellum saccharolyticum).